The following is a 198-amino-acid chain: Recombination protein RecR (198 aa).

The C4-type zinc-finger motif lies at 58-73; it reads CSTCGNFTDTDPCALC. Residues 81–175 form the Toprim domain; it reads STICVVEQPK…KVTRIAAGIP (95 aa).

It belongs to the RecR family.

Its function is as follows. May play a role in DNA repair. It seems to be involved in an RecBC-independent recombinational process of DNA repair. It may act with RecF and RecO. This chain is Recombination protein RecR, found in Clostridium botulinum (strain Alaska E43 / Type E3).